The following is a 584-amino-acid chain: J protein JJJ2 (584 aa).

In terms of domain architecture, J spans 13 to 77 (TYYSILGLTS…DQKLRYDRDL (65 aa)). Residues 216-312 (YSEDPNSCLG…FSSGSHDSNL (97 aa)) form a disordered region. A Phosphoserine modification is found at Ser-229. Positions 241-253 (QQQQQQQQQQQQQ) are enriched in low complexity. Basic and acidic residues predominate over residues 269 to 282 (KDNKESKRESRVSP). A compositionally biased stretch (polar residues) spans 299 to 312 (KTSTFSSGSHDSNL).

The protein localises to the cytoplasm. It localises to the nucleus. This chain is J protein JJJ2 (JJJ2), found in Saccharomyces cerevisiae (strain YJM789) (Baker's yeast).